A 159-amino-acid polypeptide reads, in one-letter code: 3-hydroxyacyl-[acyl-carrier-protein] dehydratase FabZ (159 aa).

The active site involves H58.

It belongs to the thioester dehydratase family. FabZ subfamily.

The protein localises to the cytoplasm. The enzyme catalyses a (3R)-hydroxyacyl-[ACP] = a (2E)-enoyl-[ACP] + H2O. Involved in unsaturated fatty acids biosynthesis. Catalyzes the dehydration of short chain beta-hydroxyacyl-ACPs and long chain saturated and unsaturated beta-hydroxyacyl-ACPs. The polypeptide is 3-hydroxyacyl-[acyl-carrier-protein] dehydratase FabZ (Helicobacter pylori (strain J99 / ATCC 700824) (Campylobacter pylori J99)).